We begin with the raw amino-acid sequence, 419 residues long: L-rhamnose isomerase (419 aa).

Residues His262, Asp294, and Asp296 each coordinate Mn(2+).

It belongs to the rhamnose isomerase family. As to quaternary structure, homotetramer. Mn(2+) is required as a cofactor.

It localises to the cytoplasm. It carries out the reaction L-rhamnopyranose = L-rhamnulose. The protein operates within carbohydrate degradation; L-rhamnose degradation; glycerone phosphate from L-rhamnose: step 1/3. In terms of biological role, catalyzes the interconversion of L-rhamnose and L-rhamnulose. The protein is L-rhamnose isomerase of Escherichia coli O45:K1 (strain S88 / ExPEC).